Reading from the N-terminus, the 391-residue chain is MKLLHRFFSNEASGGIILIIAAAAAMVFANLGATQGLYHAFLETPVELRVGVLEINKNMLLWINDALMAVFFLLVGLEVKRELVQGSLASRQRAAFPVIAAIGGMVVPALLYLAFNYQDPIARQGWAIPAATDIAFALGVLALLGSRVPVALKIFLMALAIIDDLGAIVIIALFYTSDLSILSLSVAAGAIAALALLNIFNVRRTGIYILVGVVLWTAVLKSGVHATLAGVIIGFFIPLKEQDGHSPAQQLEHVLHPWVAFMILPLFAFANAGVSLQGVTLSGLTSMLPMGIIAGLFIGKPLGISLFCWLALKLKLASLPQGTTFRQIMAVGVLCGIGFTMSIFISTLAFASMDPQLIVWAKLGILTGSLLAAFVGYSLLKVKLSGQVQPV.

Helical transmembrane passes span 14–34 (GGII…LGAT), 59–79 (MLLW…GLEV), 95–115 (AFPV…YLAF), 125–145 (GWAI…ALLG), 154–174 (IFLM…IALF), 180–200 (SILS…LNIF), 219–239 (VLKS…FIPL), 254–274 (VLHP…NAGV), 292–312 (IIAG…WLAL), 328–348 (IMAV…ISTL), and 357–377 (LIVW…FVGY).

It belongs to the NhaA Na(+)/H(+) (TC 2.A.33) antiporter family.

The protein localises to the cell inner membrane. The enzyme catalyses Na(+)(in) + 2 H(+)(out) = Na(+)(out) + 2 H(+)(in). Its function is as follows. Na(+)/H(+) antiporter that extrudes sodium in exchange for external protons. The protein is Na(+)/H(+) antiporter NhaA of Enterobacter sp. (strain 638).